The primary structure comprises 108 residues: Ig kappa chain V-V region NQ5-89.4 (108 aa).

Residues 1–23 (DIQMTQTTSSLSASLGHRVTITC) form a framework-1 region. Cys-23 and Cys-88 are oxidised to a cystine. The complementarity-determining-1 stretch occupies residues 24 to 34 (SASQDISNYLN). The interval 35–49 (WYQQKPDGTVKLLIY) is framework-2. A complementarity-determining-2 region spans residues 50 to 56 (YTSRLHS). The framework-3 stretch occupies residues 57 to 88 (GVPSRFSGSGSATDYSLTITNLQQEDXATYXC). The interval 89–97 (QQGNTLPYT) is complementarity-determining-3. The framework-4 stretch occupies residues 98–107 (FGGGTKLXIK).

Its function is as follows. Anti-2-phenyl oxazolone (PHOX) Antibody. This Mus musculus (Mouse) protein is Ig kappa chain V-V region NQ5-89.4.